Consider the following 138-residue polypeptide: Cysteine desulfuration protein SufE (138 aa).

Catalysis depends on cysteine 51, which acts as the Cysteine persulfide intermediate.

The protein belongs to the SufE family. As to quaternary structure, homodimer. Interacts with SufS.

Its subcellular location is the cytoplasm. The protein operates within cofactor biosynthesis; iron-sulfur cluster biosynthesis. Participates in cysteine desulfuration mediated by SufS. Cysteine desulfuration mobilizes sulfur from L-cysteine to yield L-alanine and constitutes an essential step in sulfur metabolism for biosynthesis of a variety of sulfur-containing biomolecules. Functions as a sulfur acceptor for SufS, by mediating the direct transfer of the sulfur atom from the S-sulfanylcysteine of SufS, an intermediate product of cysteine desulfuration process. This Salmonella agona (strain SL483) protein is Cysteine desulfuration protein SufE.